The primary structure comprises 95 residues: UPF0358 protein GTNG_0942 (95 aa).

This sequence belongs to the UPF0358 family.

The polypeptide is UPF0358 protein GTNG_0942 (Geobacillus thermodenitrificans (strain NG80-2)).